The following is a 316-amino-acid chain: HPr kinase/phosphorylase (316 aa).

Catalysis depends on residues His143 and Lys164. 158-165 provides a ligand contact to ATP; that stretch reads GEAGSGKS. Residue Ser165 participates in Mg(2+) binding. The active-site Proton acceptor; for phosphorylation activity. Proton donor; for dephosphorylation activity is Asp182. An important for the catalytic mechanism of both phosphorylation and dephosphorylation region spans residues 206–215; the sequence is LEVRGLGVLN. Residue Glu207 coordinates Mg(2+). The active site involves Arg251. The segment at 272-277 is important for the catalytic mechanism of dephosphorylation; the sequence is PVMPGR.

It belongs to the HPrK/P family. In terms of assembly, homohexamer. Mg(2+) is required as a cofactor.

It carries out the reaction [HPr protein]-L-serine + ATP = [HPr protein]-O-phospho-L-serine + ADP + H(+). It catalyses the reaction [HPr protein]-O-phospho-L-serine + phosphate + H(+) = [HPr protein]-L-serine + diphosphate. In terms of biological role, catalyzes the ATP- as well as the pyrophosphate-dependent phosphorylation of a specific serine residue in HPr, a phosphocarrier protein of the phosphoenolpyruvate-dependent sugar phosphotransferase system (PTS). HprK/P also catalyzes the pyrophosphate-producing, inorganic phosphate-dependent dephosphorylation (phosphorolysis) of seryl-phosphorylated HPr (P-Ser-HPr). This is HPr kinase/phosphorylase from Xanthomonas oryzae pv. oryzae (strain MAFF 311018).